The sequence spans 247 residues: OCIA domain-containing protein 1 (247 aa).

An OCIA domain is found at 1-112 (MNGRADFREP…KKLENSPLGE (112 aa)). Residues serine 108, serine 116, and serine 123 each carry the phosphoserine modification. Disordered stretches follow at residues 113–153 (ALRS…ADNI) and 167–230 (SASM…MQER). Composition is skewed to polar residues over residues 136 to 146 (SNVSGQSSFGT) and 168 to 177 (ASMNESTPTG). Composition is skewed to basic and acidic residues over residues 192-210 (ESPK…KNRE) and 218-230 (HKTD…MQER). At serine 193 the chain carries Phosphoserine.

This sequence belongs to the OCIAD1 family. Interacts with OCIAD2. Interacts with STAT3. Expressed at high levels in the brain and at lower levels in the heart, ovary, testis and kidney. Expression is strongest in embryonic stem cells and in the blood vessels.

The protein resides in the endosome. Functionally, maintains stem cell potency. Increases STAT3 phosphorylation and controls ERK phosphorylation. May act as a scaffold, increasing STAT3 recruitment onto endosomes. The protein is OCIA domain-containing protein 1 of Mus musculus (Mouse).